The sequence spans 51 residues: uncharacterized protein (51 aa).

The tract at residues 1–42 is disordered; that stretch reads MKMKTNKYMNMVRPAPPRRADPEGVRDPSTMGGGPNPFLRRS.

The protein resides in the mitochondrion. This is an uncharacterized protein from Saccharomyces cerevisiae (strain ATCC 204508 / S288c) (Baker's yeast).